Here is a 705-residue protein sequence, read N- to C-terminus: Probable E3 ubiquitin-protein ligase MID2 (705 aa).

An RING-type zinc finger spans residues 30–80 (CPICLELFEDPLLLPCAHSLCFSCAHRILVSSCSSGESIEPITAFQCPTCR). The segment at 137–184 (IACQFCEQDPPRDAVKTCITCEVSYCDRCLRATHPNKKPFTSHRLVEP) adopts a B box-type 1; degenerate zinc-finger fold. Residues 190–232 (LRGITCLDHENEKVNMYCVSDDQLICALCKLVGRHRDHQVASL) form a B box-type 2 zinc finger. Residues Cys-195, His-198, Cys-218, and His-224 each coordinate Zn(2+). Residues 233–301 (NDRFEKLKQT…IIQQRKQMIA (69 aa)) are a coiled coil. The 60-residue stretch at 340 to 399 (LKENDQARFLQSAKNIAERVAMATASSQVLIPDINFNDAFENFALDFSREKKLLEGLDYL) folds into the COS domain. Residues 404–504 (PPSIREELCT…EPTRLKTNSQ (101 aa)) enclose the Fibronectin type-III domain. The region spanning 486–679 (INQAGSRNSE…ILSGLPAPDF (194 aa)) is the B30.2/SPRY domain.

This sequence belongs to the TRIM/RBCC family. As to quaternary structure, homodimer or heterodimer with MID1. Interacts with IGBP1. In terms of processing, phosphorylated on serine and threonine residues. Low abundance in brain and lung, with even lower levels in heart, liver, and kidney.

The protein resides in the cytoplasm. The protein localises to the cytoskeleton. It catalyses the reaction S-ubiquitinyl-[E2 ubiquitin-conjugating enzyme]-L-cysteine + [acceptor protein]-L-lysine = [E2 ubiquitin-conjugating enzyme]-L-cysteine + N(6)-ubiquitinyl-[acceptor protein]-L-lysine.. It functions in the pathway protein modification; protein ubiquitination. E3 ubiquitin ligase that plays a role in microtubule stabilization. Mediates the 'Lys-48'-linked polyubiquitination of LRRK2 to drive its localization to microtubules and its proteasomal degradation in neurons. This ubiquitination inhibits LRRK2 kinase activation by RAB29. The chain is Probable E3 ubiquitin-protein ligase MID2 (Mid2) from Mus musculus (Mouse).